The chain runs to 166 residues: Regulatory protein RecX (166 aa).

The protein belongs to the RecX family.

Its subcellular location is the cytoplasm. Its function is as follows. Modulates RecA activity. The protein is Regulatory protein RecX of Salmonella choleraesuis (strain SC-B67).